Reading from the N-terminus, the 427-residue chain is Ribosome biogenesis protein WDR12 homolog (427 aa).

A ubiquitin-like (UBL) domain region spans residues 13-97; it reads LQLHLYTKQK…EDTVELEYVE (85 aa). 7 WD repeats span residues 109–146, 148–190, 197–236, 260–298, 301–339, 345–385, and 389–427; these read LHDD…KLTI, GHIA…NSVE, GHER…DGDS, GHRE…IKSE, GHKS…GTIV, GHTQ…APIF, and GHED…GEQK.

This sequence belongs to the WD repeat WDR12/YTM1 family.

Its subcellular location is the nucleus. It localises to the nucleolus. It is found in the nucleoplasm. Functionally, required for maturation of ribosomal RNAs and formation of the large ribosomal subunit. This chain is Ribosome biogenesis protein WDR12 homolog, found in Aedes aegypti (Yellowfever mosquito).